We begin with the raw amino-acid sequence, 330 residues long: Ribosomal RNA small subunit methyltransferase C (330 aa).

This sequence belongs to the methyltransferase superfamily. RsmC family. Monomer.

Its subcellular location is the cytoplasm. It carries out the reaction guanosine(1207) in 16S rRNA + S-adenosyl-L-methionine = N(2)-methylguanosine(1207) in 16S rRNA + S-adenosyl-L-homocysteine + H(+). In terms of biological role, specifically methylates the guanine in position 1207 of 16S rRNA in the 30S particle. This Haemophilus influenzae (strain PittGG) protein is Ribosomal RNA small subunit methyltransferase C.